Reading from the N-terminus, the 430-residue chain is MGIPGLLPQLKRIQKQVSLKKYMYQTLAIDGYAWLHRASCACAFELVMNKPTNKYLQFFIKRLQLLKRLKIKPYIVFDGDSLFVKNHTETRRRKKRLENEMIAKKLWSAGNRYNAMEYFQKSVDITPEMAKCIIDYCKLHSIPYIVAPFEADPQMVYLEKMGLIQGIISEDSDLLVFGCKTLITKLNDQGKALEISKDDFSALPENFPLGELSEQQFRNLVCLAGCDYTSGIWKVGVVTAMKIVKRYSEMKDILIQIERTEKLCFSKAFKQQVEFANYAFQYQRVFCPLSNQITTLNNIPKAVTNSHAEIIKIMKCIGSVVERGSGVRKDVINTKNIDHKVHEMIAKGELHPVDMASKLINRERKLKARKLFKVGLLGGESNSFNKKVEQPLVDTQDVLSERENSLDNKNASSIYMTSPAAISGTVPSIF.

Residues 1-96 (MGIPGLLPQL…HTETRRRKKR (96 aa)) are N-domain. 7 residues coordinate Mg(2+): aspartate 30, aspartate 78, glutamate 150, aspartate 152, aspartate 171, aspartate 173, and aspartate 227. The segment at 114–247 (NAMEYFQKSV…VTAMKIVKRY (134 aa)) is I-domain.

It belongs to the XPG/RAD2 endonuclease family. Requires Mg(2+) as cofactor.

It is found in the nucleus. In terms of biological role, 5'-&gt;3' double-stranded DNA exonuclease. The chain is DNA damage-inducible protein DIN7 (DIN7) from Saccharomyces cerevisiae (strain ATCC 204508 / S288c) (Baker's yeast).